A 411-amino-acid polypeptide reads, in one-letter code: Diaminobutyrate--2-oxoglutarate transaminase (411 aa).

N6-(pyridoxal phosphate)lysine is present on Lys-262.

It belongs to the class-III pyridoxal-phosphate-dependent aminotransferase family. Pyridoxal 5'-phosphate is required as a cofactor.

The catalysed reaction is L-2,4-diaminobutanoate + 2-oxoglutarate = L-aspartate 4-semialdehyde + L-glutamate. Its pathway is amine and polyamine biosynthesis; ectoine biosynthesis; L-ectoine from L-aspartate 4-semialdehyde: step 1/3. In terms of biological role, catalyzes reversively the conversion of L-aspartate beta-semialdehyde (ASA) to L-2,4-diaminobutyrate (DABA) by transamination with L-glutamate. The protein is Diaminobutyrate--2-oxoglutarate transaminase (ectB) of Vibrio cholerae serotype O1 (strain ATCC 39315 / El Tor Inaba N16961).